Reading from the N-terminus, the 32-residue chain is Photosystem II reaction center protein Z (32 aa).

The helical transmembrane segment at 12 to 32 (IGSAAWAGLVLLVGTLNYLVI) threads the bilayer.

Belongs to the PsbZ family. In terms of assembly, PSII is composed of 1 copy each of membrane proteins PsbA, PsbB, PsbC, PsbD, PsbE, PsbF, PsbH, PsbI, PsbJ, PsbK, PsbL, PsbM, PsbT, PsbY, PsbZ, Psb30/Ycf12, at least 3 peripheral proteins of the oxygen-evolving complex and a large number of cofactors. It forms dimeric complexes.

The protein resides in the plastid. The protein localises to the chloroplast thylakoid membrane. May control the interaction of photosystem II (PSII) cores with the light-harvesting antenna, regulates electron flow through the 2 photosystem reaction centers. PSII is a light-driven water plastoquinone oxidoreductase, using light energy to abstract electrons from H(2)O, generating a proton gradient subsequently used for ATP formation. This is Photosystem II reaction center protein Z from Euglena anabaena (Euglenaria anabaena).